The primary structure comprises 339 residues: tRNA (cytidine(56)-2'-O)-methyltransferase (339 aa).

S-adenosyl-L-methionine contacts are provided by residues Leu-79 and 105–109; that span reads GSEKV. The HD domain occupies 188–295; that stretch reads LIEHVKAVEG…VAQADNLFAG (108 aa).

This sequence belongs to the aTrm56 family. Homodimer.

Its subcellular location is the cytoplasm. It catalyses the reaction cytidine(56) in tRNA + S-adenosyl-L-methionine = 2'-O-methylcytidine(56) in tRNA + S-adenosyl-L-homocysteine + H(+). Specifically catalyzes the AdoMet-dependent 2'-O-ribose methylation of cytidine at position 56 in tRNAs. In Thermoplasma acidophilum (strain ATCC 25905 / DSM 1728 / JCM 9062 / NBRC 15155 / AMRC-C165), this protein is tRNA (cytidine(56)-2'-O)-methyltransferase.